Consider the following 358-residue polypeptide: Peptide chain release factor 1 (358 aa).

At Q233 the chain carries N5-methylglutamine.

Belongs to the prokaryotic/mitochondrial release factor family. Methylated by PrmC. Methylation increases the termination efficiency of RF1.

It is found in the cytoplasm. Functionally, peptide chain release factor 1 directs the termination of translation in response to the peptide chain termination codons UAG and UAA. The polypeptide is Peptide chain release factor 1 (Clostridium botulinum (strain 657 / Type Ba4)).